A 503-amino-acid chain; its full sequence is L-amino-acid oxidase (503 aa).

The first 18 residues, 1–18, serve as a signal peptide directing secretion; that stretch reads MNVFFMFSLLFLAALGSC. A disulfide bond links Cys-28 and Cys-191. FAD is bound by residues 61–62, 81–82, Arg-89, and 105–108; these read MS, EA, and GPMR. Arg-108 provides a ligand contact to substrate. Asn-190 is a glycosylation site (N-linked (GlcNAc...) asparagine). Residue His-241 coordinates substrate. Val-279 contacts FAD. Cys-349 and Cys-430 are joined by a disulfide. Substrate is bound at residue Tyr-390. Residues Glu-475 and 482–487 contribute to the FAD site; that span reads GWIDST. 482–483 contributes to the substrate binding site; sequence GW.

It belongs to the flavin monoamine oxidase family. FIG1 subfamily. Homodimer; non-covalently linked. FAD is required as a cofactor. Post-translationally, N-glycosylated. The enzymatic activity is not affected by deglycosylation. In terms of tissue distribution, expressed by the venom gland.

It localises to the secreted. The enzyme catalyses an L-alpha-amino acid + O2 + H2O = a 2-oxocarboxylate + H2O2 + NH4(+). It catalyses the reaction L-leucine + O2 + H2O = 4-methyl-2-oxopentanoate + H2O2 + NH4(+). It carries out the reaction L-phenylalanine + O2 + H2O = 3-phenylpyruvate + H2O2 + NH4(+). The catalysed reaction is L-methionine + O2 + H2O = 4-methylsulfanyl-2-oxobutanoate + H2O2 + NH4(+). The enzyme catalyses L-isoleucine + O2 + H2O = (S)-3-methyl-2-oxopentanoate + H2O2 + NH4(+). Catalyzes an oxidative deamination of predominantly hydrophobic and aromatic L-amino acids, thus producing hydrogen peroxide that may contribute to the diverse toxic effects of this enzyme. Is highly active on L-Met, L-Leu, L-Phe and L-Ile. Exhibits diverse biological activities, such as antibacterial on both Gram-positive and Gram-negative bacteria and antiparasitic activities, as well as induction of platelet aggregation. Effects of snake L-amino oxidases on platelets are controversial, since they either induce aggregation or inhibit agonist-induced aggregation. These different effects are probably due to different experimental conditions. This protein may also have activities in hemorrhage, hemolysis, edema, and apoptosis. The polypeptide is L-amino-acid oxidase (Bothrops pauloensis (Neuwied's lancehead)).